Here is a 430-residue protein sequence, read N- to C-terminus: Enolase (430 aa).

Gln167 contributes to the (2R)-2-phosphoglycerate binding site. Glu209 acts as the Proton donor in catalysis. Asp246, Glu289, and Asp316 together coordinate Mg(2+). (2R)-2-phosphoglycerate contacts are provided by Lys341, Arg370, Ser371, and Lys392. Residue Lys341 is the Proton acceptor of the active site.

It belongs to the enolase family. Component of the RNA degradosome, a multiprotein complex involved in RNA processing and mRNA degradation. Mg(2+) serves as cofactor.

The protein resides in the cytoplasm. The protein localises to the secreted. It is found in the cell surface. It carries out the reaction (2R)-2-phosphoglycerate = phosphoenolpyruvate + H2O. It functions in the pathway carbohydrate degradation; glycolysis; pyruvate from D-glyceraldehyde 3-phosphate: step 4/5. In terms of biological role, catalyzes the reversible conversion of 2-phosphoglycerate (2-PG) into phosphoenolpyruvate (PEP). It is essential for the degradation of carbohydrates via glycolysis. The protein is Enolase of Alcanivorax borkumensis (strain ATCC 700651 / DSM 11573 / NCIMB 13689 / SK2).